The primary structure comprises 98 residues: Gas vesicle protein A (98 aa).

The protein belongs to the gas vesicle GvpA family. In terms of assembly, the gas vesicle shell is 2 nm thick and consists of a single layer of this protein. It forms helical ribs nearly perpendicular to the long axis of the vesicle.

The protein localises to the gas vesicle shell. In terms of biological role, gas vesicles are hollow, gas filled proteinaceous nanostructures found in some microorganisms. During planktonic growth they allow positioning of the organism at a favorable depth for light or nutrient acquisition. GvpA forms the protein shell. The polypeptide is Gas vesicle protein A (Koribacter versatilis (strain Ellin345)).